The primary structure comprises 201 residues: Holliday junction branch migration complex subunit RuvA (201 aa).

A domain I region spans residues 1-64; it reads MIGRLYGKII…EDAHLLFGFA (64 aa). The interval 65–143 is domain II; the sequence is QKQDRTLFRE…GIAQTDFFVE (79 aa). Residues 144–154 are flexible linker; the sequence is HSHETMVATYE. A domain III region spans residues 154–201; it reads EIDASEEARDALLALGYKLTDAEKMIKKVHKSGATSEQLIRDALKASL.

This sequence belongs to the RuvA family. Homotetramer. Forms an RuvA(8)-RuvB(12)-Holliday junction (HJ) complex. HJ DNA is sandwiched between 2 RuvA tetramers; dsDNA enters through RuvA and exits via RuvB. An RuvB hexamer assembles on each DNA strand where it exits the tetramer. Each RuvB hexamer is contacted by two RuvA subunits (via domain III) on 2 adjacent RuvB subunits; this complex drives branch migration. In the full resolvosome a probable DNA-RuvA(4)-RuvB(12)-RuvC(2) complex forms which resolves the HJ.

The protein localises to the cytoplasm. Its function is as follows. The RuvA-RuvB-RuvC complex processes Holliday junction (HJ) DNA during genetic recombination and DNA repair, while the RuvA-RuvB complex plays an important role in the rescue of blocked DNA replication forks via replication fork reversal (RFR). RuvA specifically binds to HJ cruciform DNA, conferring on it an open structure. The RuvB hexamer acts as an ATP-dependent pump, pulling dsDNA into and through the RuvAB complex. HJ branch migration allows RuvC to scan DNA until it finds its consensus sequence, where it cleaves and resolves the cruciform DNA. In Haemophilus ducreyi (strain 35000HP / ATCC 700724), this protein is Holliday junction branch migration complex subunit RuvA.